Here is a 25-residue protein sequence, read N- to C-terminus: Kunitz-type serine protease inhibitor RsTIS5 (25 aa).

Residues 1-25 (EAEPKPFNPVCYEPKEVGPCKAYVP) enclose the BPTI/Kunitz inhibitor domain.

Serine protease inhibitor. Inhibits trypsin, elastase and plasmin. Does not inhibit kallikrein. In Rhipicephalus sanguineus (Brown dog tick), this protein is Kunitz-type serine protease inhibitor RsTIS5.